Reading from the N-terminus, the 148-residue chain is MATTAVTLKDVCPQEFIATYARFLKKTGRVQIPKWNDIAKTATYRELPPTNPDWIYYRIATLARKVYIRGGDGVATYRRVFGGNRRNGVRPNHFADVNGGNIRYCLKQLQNLKVIETDAVKGGRTITATGRRDLDRIAKQIYDKKNKI.

The protein belongs to the eukaryotic ribosomal protein eS19 family.

The protein is Small ribosomal subunit protein eS19 (rps19) of Dictyostelium discoideum (Social amoeba).